A 493-amino-acid polypeptide reads, in one-letter code: Protein nucleotidyltransferase YdiU (493 aa).

ATP contacts are provided by Gly81, Gly83, Arg84, Lys103, Asp115, Gly116, Arg166, and Arg173. The active-site Proton acceptor is Asp244. Mg(2+)-binding residues include Asn245 and Asp254. Asp254 serves as a coordination point for ATP.

Belongs to the SELO family. The cofactor is Mg(2+). Mn(2+) serves as cofactor.

It catalyses the reaction L-seryl-[protein] + ATP = 3-O-(5'-adenylyl)-L-seryl-[protein] + diphosphate. The enzyme catalyses L-threonyl-[protein] + ATP = 3-O-(5'-adenylyl)-L-threonyl-[protein] + diphosphate. It carries out the reaction L-tyrosyl-[protein] + ATP = O-(5'-adenylyl)-L-tyrosyl-[protein] + diphosphate. The catalysed reaction is L-histidyl-[protein] + UTP = N(tele)-(5'-uridylyl)-L-histidyl-[protein] + diphosphate. It catalyses the reaction L-seryl-[protein] + UTP = O-(5'-uridylyl)-L-seryl-[protein] + diphosphate. The enzyme catalyses L-tyrosyl-[protein] + UTP = O-(5'-uridylyl)-L-tyrosyl-[protein] + diphosphate. Nucleotidyltransferase involved in the post-translational modification of proteins. It can catalyze the addition of adenosine monophosphate (AMP) or uridine monophosphate (UMP) to a protein, resulting in modifications known as AMPylation and UMPylation. This Shewanella frigidimarina (strain NCIMB 400) protein is Protein nucleotidyltransferase YdiU.